Reading from the N-terminus, the 327-residue chain is Methionine import ATP-binding protein MetN (327 aa).

The 237-residue stretch at 3 to 239 (VELKNIEKIY…PKHAVTKELL (237 aa)) folds into the ABC transporter domain. 36–43 (GYSGAGKS) is an ATP binding site.

Belongs to the ABC transporter superfamily. Methionine importer (TC 3.A.1.24) family. In terms of assembly, the complex is composed of two ATP-binding proteins (MetN), two transmembrane proteins (MetI) and a solute-binding protein (MetQ).

The protein resides in the cell inner membrane. It carries out the reaction L-methionine(out) + ATP + H2O = L-methionine(in) + ADP + phosphate + H(+). The enzyme catalyses D-methionine(out) + ATP + H2O = D-methionine(in) + ADP + phosphate + H(+). Part of the ABC transporter complex MetNIQ involved in methionine import. Responsible for energy coupling to the transport system. This is Methionine import ATP-binding protein MetN from Helicobacter pylori (strain HPAG1).